A 4235-amino-acid chain; its full sequence is Tenellin synthetase (4235 aa).

The Ketosynthase family 3 (KS3) domain occupies 15–455; it reads SEPIAIVGSA…GTNAHAIIER (441 aa). Catalysis depends on for beta-ketoacyl synthase activity residues C189, H326, and H375. The segment at 590–924 is malonyl-CoA:ACP transacylase (MAT) domain; that stretch reads IFTGQGAQWP…ANDAVAFSTA (335 aa). The interval 993 to 1135 is N-terminal hotdog fold; the sequence is HELLGRRMPD…GRIAVHLGAK (143 aa). The segment at 993–1310 is dehydratase (DH) domain; the sequence is HELLGRRMPD…GFEVRAVGEP (318 aa). Residues 993 to 1313 enclose the PKS/mFAS DH domain; it reads HELLGRRMPD…VRAVGEPDAS (321 aa). The active-site Proton acceptor; for dehydratase activity is the H1025. Residues 1158-1313 are C-terminal hotdog fold; the sequence is LQQLDCEKLY…VRAVGEPDAS (156 aa). D1217 functions as the Proton donor; for dehydratase activity in the catalytic mechanism. The methyltransferase (MT) domain stretch occupies residues 1459 to 1652; that stretch reads RLYTEDKGMH…FSGVDHIVHD (194 aa). The segment at 2208–2381 is ketoreductase (KR) domain; the sequence is TYLMVGAAGG…AASIIHVGHV (174 aa). Residues 2500-2580 form the Carrier 1 domain; sequence EAAAAALKGF…QLSALAAKLA (81 aa). S2540 carries the post-translational modification O-(pantetheine 4'-phosphoryl)serine. The disordered stretch occupies residues 2587–2709; sequence RAQLEEASGN…EISSNGFFTQ (123 aa). A compositionally biased stretch (basic and acidic residues) spans 2605-2619; the sequence is NDKETGPSKKGKAQE. Polar residues-rich tracts occupy residues 2645–2659 and 2666–2678; these read GGSSTANFTTSSSVS and QESTLQSSENNGE. Over residues 2679–2695 the composition is skewed to low complexity; the sequence is STPSKSSNCNSDSGSDN. A condensation (C) domain region spans residues 2720-3163; sequence REAPMSPAQS…TAQSVGDCVV (444 aa). The adenylation (A) (KR) domain stretch occupies residues 3197 to 3609; the sequence is CQQHSTKSAI…DGTLLCFGRI (413 aa). Positions 3724–3750 are disordered; it reads DEAAAATSPSNDNNNNNTPSGGGGEKM. Over residues 3726–3742 the composition is skewed to low complexity; sequence AAAATSPSNDNNNNNTP. Residues 3748–3833 form the Carrier 2 domain; the sequence is EKMTVRQGEL…GMARCVAEQR (86 aa). Residue S3793 is modified to O-(pantetheine 4'-phosphoryl)serine. Residues 3860–3889 are disordered; the sequence is EKLQHSSASSSSSSSSSSAGSSSTQRPRKT. The span at 3865–3882 shows a compositional bias: low complexity; that stretch reads SSASSSSSSSSSSAGSSS. Residues 3896 to 4141 form a reductase (RED) domain region; sequence LTGATGFLGG…LDFGQVDKVV (246 aa).

It in the C-terminal section; belongs to the NRP synthetase family.

The protein operates within secondary metabolite biosynthesis. Hybrid PKS-NRPS synthetase; part of the gene cluster that mediates the biosynthesis of tenellin-type 2-pyridones, iron-chelating compounds involved in iron stress tolerance, competition with the natural competitor fungus Metarhizium robertsii and insect hosts infection. TenS catalyzes the assembly of the polyketide-amino acid backbone. Because tenS lacks a designated enoylreductase (ER) domain, the required activity is provided the enoyl reductase tenC. Upon formation of the polyketide backbone on the thiotemplate, the triketide is transferred to the NRPS module and linked to tyrosine to produce the pyrrolidine-2-dione intermediates, including pretellinin A, 11-hydropretellenin A, 12-hydropretellenin A, 13-hydropretellenin A, 14-hydropretellenin A, 12-oxopretellenin A and prototellinin D. The pathway begins with the assembly of the polyketide-amino acid backbone by the hybrid PKS-NRPS tenS with the help of the enoyl reductase tenC. These enzymes catalyze the synthesis of the pyrrolidine-2-dione intermediates pretellinin A, 11-hydropretellenin A, 12-hydropretellenin A, 13-hydropretellenin A, 14-hydropretellenin A, 12-oxopretellenin A and prototellinin D. The cytochrome P450 monooxygenase tenA then catalyzes an oxidative ring expansion of pretenellin A and 14-hydropretellenin A to form the 2-pyridone core, leading to pretenellin B and pyridovericin, respectively. The cytochrome P450 monooxygenase tenB is then required for the selective N-hydroxylation of the 2-pyridone nitrogen of yield tellinin and 15-hydroxytellenin (15-HT), respectively. The UDP-glucosyltransferase GT1 and the methyltransferase MT1, located outside the tenS gene cluster, contribute to the stepwise glycosylation and methylation of 15-HT to obtain the glycoside pyridovericin-N-O-(4-O-methyl-beta-D-glucopyranoside) (PMGP). Additional related compounds such as 1-O-methyl-15-HT, (8Z)-1-O-methyl-15-HT, and O-methyltenellin A are also produced but the enzymes involved in their biosynthesis have still to be determined. The polypeptide is Tenellin synthetase (Beauveria bassiana (strain ARSEF 2860) (White muscardine disease fungus)).